The chain runs to 442 residues: tRNA-2-methylthio-N(6)-dimethylallyladenosine synthase (442 aa).

One can recognise an MTTase N-terminal domain in the interval 2–120 (KKVFIRTFGC…LPKMIVDKET (119 aa)). Cys11, Cys49, Cys83, Cys157, Cys161, and Cys164 together coordinate [4Fe-4S] cluster. The region spanning 143–375 (RVEGGAAFVS…NEVIEAETAR (233 aa)) is the Radical SAM core domain. The region spanning 378-441 (QTMIGTVQRC…TFSLRGKIVE (64 aa)) is the TRAM domain.

It belongs to the methylthiotransferase family. MiaB subfamily. As to quaternary structure, monomer. It depends on [4Fe-4S] cluster as a cofactor.

Its subcellular location is the cytoplasm. The catalysed reaction is N(6)-dimethylallyladenosine(37) in tRNA + (sulfur carrier)-SH + AH2 + 2 S-adenosyl-L-methionine = 2-methylsulfanyl-N(6)-dimethylallyladenosine(37) in tRNA + (sulfur carrier)-H + 5'-deoxyadenosine + L-methionine + A + S-adenosyl-L-homocysteine + 2 H(+). In terms of biological role, catalyzes the methylthiolation of N6-(dimethylallyl)adenosine (i(6)A), leading to the formation of 2-methylthio-N6-(dimethylallyl)adenosine (ms(2)i(6)A) at position 37 in tRNAs that read codons beginning with uridine. The polypeptide is tRNA-2-methylthio-N(6)-dimethylallyladenosine synthase (Neisseria gonorrhoeae (strain ATCC 700825 / FA 1090)).